The following is a 72-amino-acid chain: Large ribosomal subunit protein bL31c (72 aa).

The protein belongs to the bacterial ribosomal protein bL31 family. Type A subfamily. In terms of assembly, part of the 50S ribosomal subunit.

It is found in the plastid. Its subcellular location is the chloroplast. Its function is as follows. Binds the 23S rRNA. The protein is Large ribosomal subunit protein bL31c of Trieres chinensis (Marine centric diatom).